A 421-amino-acid chain; its full sequence is ATP-dependent RNA helicase RhlB (421 aa).

The Q motif signature appears at 9–37 (QKFSDFSLHPKVVEALEKKGFHNCTPIQA). A Helicase ATP-binding domain is found at 40-219 (LPLTLAGRDV…FEQMNNAEYI (180 aa)). 53–60 (AQTGTGKT) contributes to the ATP binding site. The short motif at 165–168 (DEAD) is the DEAD box element. Residues 245–390 (RLLQTLIEEE…VSKYNPDALM (146 aa)) enclose the Helicase C-terminal domain. The interval 392 to 421 (DLPKPLRLTRPRTGNGPRRTGAPRNRRRSG) is disordered. Residues 402-414 (PRTGNGPRRTGAP) show a composition bias toward low complexity.

The protein belongs to the DEAD box helicase family. RhlB subfamily. Component of the RNA degradosome, which is a multiprotein complex involved in RNA processing and mRNA degradation.

The protein resides in the cytoplasm. The enzyme catalyses ATP + H2O = ADP + phosphate + H(+). Functionally, DEAD-box RNA helicase involved in RNA degradation. Has RNA-dependent ATPase activity and unwinds double-stranded RNA. This Shigella dysenteriae serotype 1 (strain Sd197) protein is ATP-dependent RNA helicase RhlB.